Consider the following 1034-residue polypeptide: Translation initiation factor IF-2 (1034 aa).

Disordered stretches follow at residues alanine 118–glutamate 140 and glutamate 154–alanine 446. Composition is skewed to low complexity over residues threonine 162–proline 178 and proline 212–serine 228. Basic and acidic residues predominate over residues aspartate 304 to glutamate 315. The tr-type G domain maps to proline 535–glutamate 702. Residues glycine 544–threonine 551 form a G1 region. Position 544-551 (glycine 544–threonine 551) interacts with GTP. A G2 region spans residues glycine 569–histidine 573. Residues aspartate 590 to glycine 593 form a G3 region. GTP contacts are provided by residues aspartate 590–histidine 594 and asparagine 644–aspartate 647. The segment at asparagine 644 to aspartate 647 is G4. The tract at residues serine 680–lysine 682 is G5.

Belongs to the TRAFAC class translation factor GTPase superfamily. Classic translation factor GTPase family. IF-2 subfamily.

The protein localises to the cytoplasm. One of the essential components for the initiation of protein synthesis. Protects formylmethionyl-tRNA from spontaneous hydrolysis and promotes its binding to the 30S ribosomal subunits. Also involved in the hydrolysis of GTP during the formation of the 70S ribosomal complex. The sequence is that of Translation initiation factor IF-2 from Bordetella avium (strain 197N).